The sequence spans 163 residues: Thiol peroxidase (163 aa).

One can recognise a Thioredoxin domain in the interval 16 to 162; the sequence is LQVGDTAHDF…YDAAIAAVKS (147 aa). Residue C58 is the Cysteine sulfenic acid (-SOH) intermediate of the active site. A disulfide bond links C58 and C92.

Belongs to the peroxiredoxin family. Tpx subfamily. Homodimer.

The enzyme catalyses a hydroperoxide + [thioredoxin]-dithiol = an alcohol + [thioredoxin]-disulfide + H2O. In terms of biological role, thiol-specific peroxidase that catalyzes the reduction of hydrogen peroxide and organic hydroperoxides to water and alcohols, respectively. Plays a role in cell protection against oxidative stress by detoxifying peroxides. The polypeptide is Thiol peroxidase (Streptococcus sanguinis).